Here is a 419-residue protein sequence, read N- to C-terminus: UDP-N-acetylglucosamine 1-carboxyvinyltransferase (419 aa).

A phosphoenolpyruvate-binding site is contributed by 22-23 (KN). Arg93 contacts UDP-N-acetyl-alpha-D-glucosamine. Cys117 acts as the Proton donor in catalysis. Cys117 carries the post-translational modification 2-(S-cysteinyl)pyruvic acid O-phosphothioketal. 2 residues coordinate UDP-N-acetyl-alpha-D-glucosamine: Asp306 and Ile328.

This sequence belongs to the EPSP synthase family. MurA subfamily.

It is found in the cytoplasm. It catalyses the reaction phosphoenolpyruvate + UDP-N-acetyl-alpha-D-glucosamine = UDP-N-acetyl-3-O-(1-carboxyvinyl)-alpha-D-glucosamine + phosphate. Its pathway is cell wall biogenesis; peptidoglycan biosynthesis. Functionally, cell wall formation. Adds enolpyruvyl to UDP-N-acetylglucosamine. This Ruthia magnifica subsp. Calyptogena magnifica protein is UDP-N-acetylglucosamine 1-carboxyvinyltransferase.